The following is a 302-amino-acid chain: Sulfate adenylyltransferase subunit 2 (302 aa).

The tract at residues 280-302 (RQGRLIDSDQSASMEQKKRQGYF) is disordered.

This sequence belongs to the PAPS reductase family. CysD subfamily. Heterodimer composed of CysD, the smaller subunit, and CysN.

The enzyme catalyses sulfate + ATP + H(+) = adenosine 5'-phosphosulfate + diphosphate. It functions in the pathway sulfur metabolism; hydrogen sulfide biosynthesis; sulfite from sulfate: step 1/3. With CysN forms the ATP sulfurylase (ATPS) that catalyzes the adenylation of sulfate producing adenosine 5'-phosphosulfate (APS) and diphosphate, the first enzymatic step in sulfur assimilation pathway. APS synthesis involves the formation of a high-energy phosphoric-sulfuric acid anhydride bond driven by GTP hydrolysis by CysN coupled to ATP hydrolysis by CysD. The chain is Sulfate adenylyltransferase subunit 2 from Shewanella oneidensis (strain ATCC 700550 / JCM 31522 / CIP 106686 / LMG 19005 / NCIMB 14063 / MR-1).